A 331-amino-acid chain; its full sequence is Serine racemase (331 aa).

ATP is bound by residues Ser-34 and Lys-54. Catalysis depends on Lys-59, which acts as the Proton acceptor. Lys-59 bears the N6-(pyridoxal phosphate)lysine mark. Thr-81 serves as a coordination point for Ca(2+). Ser-84 functions as the Proton acceptor in the catalytic mechanism. Position 86 (Asn-86) interacts with pyridoxal 5'-phosphate. Tyr-121 provides a ligand contact to ATP. Asp-178 contacts Mg(2+). 3 residues coordinate pyridoxal 5'-phosphate: Gly-186, Gly-187, and Gly-188. Ca(2+) is bound by residues Glu-210, Ala-214, and Asp-216. The Mg(2+) site is built by Glu-210, Ala-214, and Asp-216. The Mn(2+) site is built by Glu-210, Ala-214, and Asp-216. Position 278 (Lys-278) interacts with ATP. Pyridoxal 5'-phosphate is bound at residue Ser-314. Asn-317 is a binding site for ATP.

This sequence belongs to the serine/threonine dehydratase family. Homodimer. The cofactor is Mg(2+). Mn(2+) serves as cofactor. Requires Ca(2+) as cofactor. Pyridoxal 5'-phosphate is required as a cofactor. In terms of tissue distribution, expressed in the whole plant.

The catalysed reaction is L-serine = D-serine. The enzyme catalyses L-serine = pyruvate + NH4(+). It carries out the reaction D-serine = pyruvate + NH4(+). Inhibited by hydroxylamine. Racemase activity is enhanced by Ca(2+), Mg(2+), Mn(2+), and is decreased by Ni(2+), Zn(2+). Hydratase activity is enhanced by Ca(2+), Mg(2+), Mn(2+), Cu(2+), Fe(2+), Ni(2+). In terms of biological role, catalyzes the synthesis of D-serine from L-serine. Has dehydratase activity towards both L-serine and D-serine. Displays high substrate specificity for L-serine, whereas L-alanine, L-arginine, and L-glutamine were poor substrates. This is Serine racemase (SR) from Arabidopsis thaliana (Mouse-ear cress).